A 190-amino-acid polypeptide reads, in one-letter code: Cytoplasmic envelopment protein 3 (190 aa).

A lipid anchor (N-myristoyl glycine; by host) is attached at Gly2. The disordered stretch occupies residues 14–190; that stretch reads GTTSGEPLKD…TKKPAASLPF (177 aa). Positions 30–43 are enriched in polar residues; the sequence is SLRSYDNIPPTSSS. Over residues 44-58 the composition is skewed to acidic residues; it reads DEGEDDDDGEDDDNE. Over residues 80–90 the composition is skewed to basic and acidic residues; sequence SHREATHDGPK. Positions 108-123 are enriched in basic residues; sequence KQSKKKKKPSKHHHHQ. A compositionally biased stretch (acidic residues) spans 130 to 139; sequence ETDDLDEEDT.

The protein belongs to the herpesviridae cytoplasmic envelopment protein 3 family. In terms of assembly, interacts with cytoplasmic envelopment protein 2; this interaction is essential for the proper localization of each protein to the assembly complex and thus for the production of infectious virus. Post-translationally, myristoylation and palmitoylation (probably on one or more of the nearby cysteines at the N-terminus) enable membrane-binding and Golgi apparatus-specific targeting and are essential for efficient packaging. In terms of processing, phosphorylated. Phosphorylation does not seem to be required for recycling to the host Golgi apparatus. Packaging is selective for underphosphorylated forms.

It is found in the virion tegument. The protein resides in the virion membrane. The protein localises to the host cell membrane. Its subcellular location is the host Golgi apparatus membrane. In terms of biological role, plays an important role in the cytoplasmic envelopment of tegument proteins and capsids during the assembly and egress processes. Also participates in viral entry at the fusion step probably by regulating the core fusion machinery. The chain is Cytoplasmic envelopment protein 3 (UL99) from Human cytomegalovirus (strain Merlin) (HHV-5).